We begin with the raw amino-acid sequence, 430 residues long: C4-dicarboxylate transport protein (430 aa).

A run of 9 helical transmembrane segments spans residues 8–28 (SLYFQVLAAITIGILLGHFYP), 44–64 (LIKMIIAPVIFCTVVTGIAGM), 76–96 (AALLYFEVVSTIALIIGLVVV), 144–164 (AFASGNILQVLLFAVMFGFAL), 184–204 (VIFGVINMIMKLAPLGAFGAM), 222–242 (LILCFYLTCILFVFLVLGSIA), 289–309 (VVGLVIPTGYSFNLDGTSIYL), 326–346 (IWHQITLLVVLLLSSKGAAGV), and 352–372 (IVLAATLSAVGHLPVAGLALI).

The protein belongs to the dicarboxylate/amino acid:cation symporter (DAACS) (TC 2.A.23) family.

The protein resides in the cell inner membrane. In terms of biological role, responsible for the transport of dicarboxylates such as succinate, fumarate, and malate from the periplasm across the membrane. The sequence is that of C4-dicarboxylate transport protein from Pectobacterium atrosepticum (strain SCRI 1043 / ATCC BAA-672) (Erwinia carotovora subsp. atroseptica).